A 403-amino-acid chain; its full sequence is Octaketide synthase 1 (403 aa).

Cys174 is a catalytic residue. CoA-binding positions include Ser281 and 318–321; that span reads GGRA.

The protein belongs to the thiolase-like superfamily. Chalcone/stilbene synthases family. As to quaternary structure, homodimer.

The protein operates within secondary metabolite biosynthesis; flavonoid biosynthesis. Catalyzes the iterative condensations of 8 molecules of malonyl-CoA to produce aromatic octaketides, SEK4 and SEK4b, the products of the minimal polyketide synthase for the benzoisochromanequinone actinorhodin. May be involved in the biosynthesis of the octaketide barbaloin. The chain is Octaketide synthase 1 from Aloe arborescens (Kidachi aloe).